The following is a 160-amino-acid chain: Transcription antitermination protein NusB (160 aa).

Belongs to the NusB family.

Functionally, involved in transcription antitermination. Required for transcription of ribosomal RNA (rRNA) genes. Binds specifically to the boxA antiterminator sequence of the ribosomal RNA (rrn) operons. The chain is Transcription antitermination protein NusB from Gluconobacter oxydans (strain 621H) (Gluconobacter suboxydans).